Reading from the N-terminus, the 156-residue chain is Snaclec A10 (156 aa).

The signal sequence occupies residues 1-23 (MGRSISVSFGLLVVFLSLSGIGA). Cystine bridges form between Cys27–Cys38, Cys55–Cys154, and Cys129–Cys146. One can recognise a C-type lectin domain in the interval 34–155 (YDQHCYQAVD…CGQPYRFTCE (122 aa)).

The protein belongs to the snaclec family. Heterodimer; disulfide-linked. Expressed by the venom gland.

It localises to the secreted. Its function is as follows. Interferes with one step of hemostasis (modulation of platelet aggregation, or coagulation cascade, for example). The polypeptide is Snaclec A10 (Macrovipera lebetinus (Levantine viper)).